The chain runs to 249 residues: Phosphoadenosine 5'-phosphosulfate reductase (249 aa).

Catalysis depends on Cys230, which acts as the Nucleophile; cysteine thiosulfonate intermediate.

Belongs to the PAPS reductase family. CysH subfamily.

It is found in the cytoplasm. The enzyme catalyses [thioredoxin]-disulfide + sulfite + adenosine 3',5'-bisphosphate + 2 H(+) = [thioredoxin]-dithiol + 3'-phosphoadenylyl sulfate. The protein operates within sulfur metabolism; hydrogen sulfide biosynthesis; sulfite from sulfate: step 3/3. Functionally, catalyzes the formation of sulfite from phosphoadenosine 5'-phosphosulfate (PAPS) using thioredoxin as an electron donor. The protein is Phosphoadenosine 5'-phosphosulfate reductase of Synechocystis sp. (strain ATCC 27184 / PCC 6803 / Kazusa).